The following is a 111-amino-acid chain: Rubredoxin (111 aa).

The Rubredoxin-like domain maps to 11 to 62; the sequence is LDRFECRSCGYVYEPEKGDSKHDIAPETPFAELPINWRCPVCTAKKAAFSNI. Cysteine 16, cysteine 19, cysteine 49, and cysteine 52 together coordinate Fe cation.

It belongs to the rubredoxin family. Requires Fe(3+) as cofactor.

Its function is as follows. Rubredoxin is a small nonheme, iron protein lacking acid-labile sulfide. Its single Fe, chelated to 4 Cys, functions as an electron acceptor and may also stabilize the conformation of the molecule. Could be involved in hydrogenase-linked redox processes. This Trichormus variabilis (strain ATCC 29413 / PCC 7937) (Anabaena variabilis) protein is Rubredoxin (rub).